An 829-amino-acid chain; its full sequence is Cadherin-3 (829 aa).

Positions 1-24 (MGLPRGPLASLLLLQVCWLQCAAS) are cleaved as a signal peptide. Positions 25-107 (EPCRAVFREA…SKRILRRHKR (83 aa)) are excised as a propeptide. 5 Cadherin domains span residues 108 to 215 (DWVV…KPKF), 216 to 328 (TQDT…APMF), 329 to 440 (DPQK…APVF), 441 to 546 (VPPS…DHGP), and 547 to 650 (VPEP…CPGP). Topologically, residues 108–654 (DWVVAPISVP…ETCPGPWKGG (547 aa)) are extracellular. Residue Asn-200 is glycosylated (N-linked (GlcNAc...) asparagine). Residue Asn-566 is glycosylated (N-linked (GlcNAc...) asparagine). The helical transmembrane segment at 655–677 (FILPVLGAVLALLFLLLVLLLLV) threads the bilayer. Topologically, residues 678–829 (RKKRKIKEPL…ADMYGGGEDD (152 aa)) are cytoplasmic.

As to quaternary structure, interacts with CDCP1 and CTNNB1. Expressed in some normal epithelial tissues and in some carcinoma cell lines.

The protein localises to the cell membrane. In terms of biological role, cadherins are calcium-dependent cell adhesion proteins. They preferentially interact with themselves in a homophilic manner in connecting cells; cadherins may thus contribute to the sorting of heterogeneous cell types. This chain is Cadherin-3 (CDH3), found in Homo sapiens (Human).